A 456-amino-acid polypeptide reads, in one-letter code: Yersinopine synthase (456 aa).

NADP(+) is bound by residues 12–15, 35–40, and T154; these read AGPA and NRPSTK. H242 serves as the catalytic Proton donor/acceptor.

The protein belongs to the staphylopine dehydrogenase family. As to quaternary structure, homodimer.

The catalysed reaction is yersinopine + NADP(+) + H2O = (2S)-2-amino-4-{[(1S)-1-carboxy-2-(1H-imidazol-4-yl)ethyl]amino}butanoate + pyruvate + NADPH + H(+). Functionally, catalyzes the NADPH-dependent reductive condensation of pyruvate to the intermediate formed by the adjacently encoded enzyme y2836, namely (2S)-2-amino-4-{[(1S)-1-carboxy-2-(1H-imidazol-4-yl)ethyl]amino}butanoate, leading to the production of yersinopine. This is the last step in the biosynthesis of the metallophore yersinopine, which is involved in metal acquisition and thus enables bacterial growth inside the host, where metal access is limited. Therefore, this enzyme probably contributes to Yersinia virulence. Cannot use alpha-ketoglutarate in place of pyruvate, and displays only poor efficiency with oxaloacetate and glyoxylate. The protein is Yersinopine synthase of Yersinia pestis.